A 316-amino-acid polypeptide reads, in one-letter code: Transaldolase (316 aa).

Catalysis depends on Lys-132, which acts as the Schiff-base intermediate with substrate.

It belongs to the transaldolase family. Type 1 subfamily. Homodimer.

The protein localises to the cytoplasm. The enzyme catalyses D-sedoheptulose 7-phosphate + D-glyceraldehyde 3-phosphate = D-erythrose 4-phosphate + beta-D-fructose 6-phosphate. It participates in carbohydrate degradation; pentose phosphate pathway; D-glyceraldehyde 3-phosphate and beta-D-fructose 6-phosphate from D-ribose 5-phosphate and D-xylulose 5-phosphate (non-oxidative stage): step 2/3. Its function is as follows. Transaldolase is important for the balance of metabolites in the pentose-phosphate pathway. The polypeptide is Transaldolase (Marinomonas sp. (strain MWYL1)).